The following is a 307-amino-acid chain: METKDGFLVINKDKGCTSHDCVKQIRKLLNTKKVGHTGTLDPEVIGTLPIAIGNATRFIQYLPQGKTYIGEIKLGIRTSTDDIQGEIISQKSWPKISYKQLDQYFNRFRGIIKQIPPKVSSVHVNGERAYKKSFRNEIFELAPREVKIDELILMNWDQINGIIEIKIKCSAGTYIRSIARDIGETLNSAGCLLQLKRISACGFDEQNSIKISDIEKEKGKKNSKNFIIPTISALSHISTFVLSNEEQINFWQTGREIKVDINYFRESKSFDYKKPIKVIDNKQTLLGIGFLNKEQSNINPKLVLNAK.

The active-site Nucleophile is Asp41.

The protein belongs to the pseudouridine synthase TruB family. Type 1 subfamily.

It catalyses the reaction uridine(55) in tRNA = pseudouridine(55) in tRNA. Functionally, responsible for synthesis of pseudouridine from uracil-55 in the psi GC loop of transfer RNAs. The sequence is that of tRNA pseudouridine synthase B from Prochlorococcus marinus (strain AS9601).